A 210-amino-acid chain; its full sequence is Large ribosomal subunit protein uL3 (210 aa).

The disordered stretch occupies residues 125 to 151 (HGFGGGPRTHGQSDRLRAPGSIGAGTD).

It belongs to the universal ribosomal protein uL3 family. As to quaternary structure, part of the 50S ribosomal subunit. Forms a cluster with proteins L14 and L19.

In terms of biological role, one of the primary rRNA binding proteins, it binds directly near the 3'-end of the 23S rRNA, where it nucleates assembly of the 50S subunit. In Roseiflexus sp. (strain RS-1), this protein is Large ribosomal subunit protein uL3.